Reading from the N-terminus, the 113-residue chain is Large ribosomal subunit protein uL22 (113 aa).

It belongs to the universal ribosomal protein uL22 family. As to quaternary structure, part of the 50S ribosomal subunit.

In terms of biological role, this protein binds specifically to 23S rRNA; its binding is stimulated by other ribosomal proteins, e.g. L4, L17, and L20. It is important during the early stages of 50S assembly. It makes multiple contacts with different domains of the 23S rRNA in the assembled 50S subunit and ribosome. Functionally, the globular domain of the protein is located near the polypeptide exit tunnel on the outside of the subunit, while an extended beta-hairpin is found that lines the wall of the exit tunnel in the center of the 70S ribosome. In Pelotomaculum thermopropionicum (strain DSM 13744 / JCM 10971 / SI), this protein is Large ribosomal subunit protein uL22.